The chain runs to 75 residues: Rugosin-LK1 (75 aa).

An N-terminal signal peptide occupies residues 1 to 22 (MFTMKKSLLFLFFLGTISLSFC). The propeptide occupies 23–40 (EEERSADEDDEGEMTEEE).

As to expression, expressed by the skin glands.

It localises to the secreted. Its function is as follows. Has antimicrobial activity against Gram-positive bacteria S.aureus ATCC 2592 (MIC=10.0 uM), S.aureus ATCC 43300 (MIC=15.0 uM) and B.subtilis (MIC=40.0 uM), against Gram-negative bacteria E.coli ML-35P (MIC=10.0 uM), P.aeruginosa PA01 (MIC=5.0 uM) and P.aeruginosa ATCC 27853 (MIC=5.0 uM) and against fungus C.albicans ATCC 2002 (MIC=10.0 uM). The sequence is that of Rugosin-LK1 from Limnonectes kuhlii (Kuhl's Creek frog).